Here is a 301-residue protein sequence, read N- to C-terminus: Uricase-2 isozyme 2 (301 aa).

Residues Lys-17 and Thr-63 each act as charge relay system in the active site. Thr-63, Asp-64, Phe-165, Arg-182, Val-237, Gln-238, and Asn-257 together coordinate urate. Residue His-259 is the Charge relay system of the active site. The Microbody targeting signal signature appears at 299–301; that stretch reads SKL.

Belongs to the uricase family.

Its subcellular location is the peroxisome. The enzyme catalyses urate + O2 + H2O = 5-hydroxyisourate + H2O2. Its pathway is purine metabolism; urate degradation; (S)-allantoin from urate: step 1/3. Catalyzes the oxidation of uric acid to 5-hydroxyisourate, which is further processed to form (S)-allantoin. This chain is Uricase-2 isozyme 2, found in Canavalia lineata (Beach bean).